The primary structure comprises 473 residues: Glutamate--tRNA ligase 1 (473 aa).

Residues 11–21 (PSPTGYLHIGG) carry the 'HIGH' region motif. Basic and acidic residues predominate over residues 113-133 (KARAEGRPPRYDGRWRDRDPS). A disordered region spans residues 113–136 (KARAEGRPPRYDGRWRDRDPSEAP). Positions 240–244 (KLSKR) match the 'KMSKS' region motif. Lysine 243 is a binding site for ATP.

This sequence belongs to the class-I aminoacyl-tRNA synthetase family. Glutamate--tRNA ligase type 1 subfamily. In terms of assembly, monomer.

The protein localises to the cytoplasm. It carries out the reaction tRNA(Glu) + L-glutamate + ATP = L-glutamyl-tRNA(Glu) + AMP + diphosphate. In terms of biological role, catalyzes the attachment of glutamate to tRNA(Glu) in a two-step reaction: glutamate is first activated by ATP to form Glu-AMP and then transferred to the acceptor end of tRNA(Glu). In Brucella melitensis biotype 1 (strain ATCC 23456 / CCUG 17765 / NCTC 10094 / 16M), this protein is Glutamate--tRNA ligase 1.